The following is a 598-amino-acid chain: Elongation factor 4 (598 aa).

Residues 2–184 (QHIRNFSIIA…TVVRRVPPPK (183 aa)) form the tr-type G domain. Residues 14 to 19 (DHGKST) and 131 to 134 (NKID) each bind GTP.

The protein belongs to the TRAFAC class translation factor GTPase superfamily. Classic translation factor GTPase family. LepA subfamily.

The protein localises to the cell inner membrane. It carries out the reaction GTP + H2O = GDP + phosphate + H(+). Its function is as follows. Required for accurate and efficient protein synthesis under certain stress conditions. May act as a fidelity factor of the translation reaction, by catalyzing a one-codon backward translocation of tRNAs on improperly translocated ribosomes. Back-translocation proceeds from a post-translocation (POST) complex to a pre-translocation (PRE) complex, thus giving elongation factor G a second chance to translocate the tRNAs correctly. Binds to ribosomes in a GTP-dependent manner. The protein is Elongation factor 4 of Aromatoleum aromaticum (strain DSM 19018 / LMG 30748 / EbN1) (Azoarcus sp. (strain EbN1)).